Here is a 343-residue protein sequence, read N- to C-terminus: GTP 3',8-cyclase (343 aa).

One can recognise a Radical SAM core domain in the interval 19-244; the sequence is PFGRNISYLR…TDLDDSTGGP (226 aa). Arg28 serves as a coordination point for GTP. Residues Cys35 and Cys39 each coordinate [4Fe-4S] cluster. S-adenosyl-L-methionine is bound at residue Tyr41. Cys42 is a [4Fe-4S] cluster binding site. Arg77 is a GTP binding site. Gly81 is an S-adenosyl-L-methionine binding site. Thr111 contributes to the GTP binding site. Ser135 lines the S-adenosyl-L-methionine pocket. Lys171 contributes to the GTP binding site. Met205 lines the S-adenosyl-L-methionine pocket. [4Fe-4S] cluster is bound by residues Cys268 and Cys271. 273–275 is a binding site for GTP; that stretch reads RVR. Cys285 is a binding site for [4Fe-4S] cluster.

It belongs to the radical SAM superfamily. MoaA family. Monomer and homodimer. Requires [4Fe-4S] cluster as cofactor.

It carries out the reaction GTP + AH2 + S-adenosyl-L-methionine = (8S)-3',8-cyclo-7,8-dihydroguanosine 5'-triphosphate + 5'-deoxyadenosine + L-methionine + A + H(+). It functions in the pathway cofactor biosynthesis; molybdopterin biosynthesis. Its function is as follows. Catalyzes the cyclization of GTP to (8S)-3',8-cyclo-7,8-dihydroguanosine 5'-triphosphate. This chain is GTP 3',8-cyclase, found in Nitrobacter winogradskyi (strain ATCC 25391 / DSM 10237 / CIP 104748 / NCIMB 11846 / Nb-255).